The chain runs to 181 residues: Oligoribonuclease (181 aa).

Residues 8-171 (LIWIDLEMTG…DDIRESVAEL (164 aa)) form the Exonuclease domain. The active site involves Tyr-129.

It belongs to the oligoribonuclease family.

The protein localises to the cytoplasm. In terms of biological role, 3'-to-5' exoribonuclease specific for small oligoribonucleotides. This Shigella flexneri protein is Oligoribonuclease.